A 232-amino-acid polypeptide reads, in one-letter code: Protein TIFY 10c (232 aa).

Residues 54-73 (PPAAGAGGAFRPPPTTMNLL) form a disordered region. A Tify domain is found at 114–149 (AGEKAQQLTIFYGGKVVVFENFPSTKVKDLLQIVST). Positions 151 to 176 (DGVDKNTGTAATQSLPRPAHNSLPDL) are disordered. Positions 156-165 (NTGTAATQSL) are enriched in polar residues. Positions 177 to 202 (PIARRNSLHRFLEKRKGRMNANAPYQ) match the Jas motif. Residues 179–186 (ARRNSLHR) carry the Nuclear localization signal motif.

The protein belongs to the TIFY/JAZ family. In terms of assembly, interacts with BHLH148. Interacts with COI1B in a coronatine-dependent manner. Coronatine is an analog of jasmonoyl isoleucine (JA-Ile). Interacts with TIFY5/JAZ2, TIFY6B/JAZ4, TIFY9/JAZ5, TIFY11A, TIFY11D/JAZ12 and TIFY11G/JAZ15. Post-translationally, ubiquitinated. Increase in jasmonoyl isoleucine (JA-Ile) levels mediates its degradation via COI1B-mediated proteasome pathway.

The protein localises to the nucleus. The protein resides in the cytoplasm. It is found in the cytosol. Functionally, repressor of jasmonate (JA) responses. Acts as a repressor of JA-induced resistance to the bacterial blight pathogen Xanthomonas oryzae pv. oryzae (Xoo). Regulates JA-induced accumulation of linalool at the transcriptional level of linalool synthase gene LIS. Linalool is important for resistance to bacterial blight pathogen Xoo. The sequence is that of Protein TIFY 10c from Oryza sativa subsp. indica (Rice).